Here is a 366-residue protein sequence, read N- to C-terminus: sn-glycerol-3-phosphate import ATP-binding protein UgpC (366 aa).

The region spanning 4–235 (LSLRNVQKTY…PASTFVAGFI (232 aa)) is the ABC transporter domain. 37 to 44 (GPSGCGKS) lines the ATP pocket.

The protein belongs to the ABC transporter superfamily. sn-glycerol-3-phosphate importer (TC 3.A.1.1.3) family. The complex is composed of two ATP-binding proteins (UgpC), two transmembrane proteins (UgpA and UgpE) and a solute-binding protein (UgpB).

It is found in the cell inner membrane. It catalyses the reaction sn-glycerol 3-phosphate(out) + ATP + H2O = sn-glycerol 3-phosphate(in) + ADP + phosphate + H(+). Its function is as follows. Part of the ABC transporter complex UgpBAEC involved in sn-glycerol-3-phosphate (G3P) import. Responsible for energy coupling to the transport system. This Cupriavidus necator (strain ATCC 17699 / DSM 428 / KCTC 22496 / NCIMB 10442 / H16 / Stanier 337) (Ralstonia eutropha) protein is sn-glycerol-3-phosphate import ATP-binding protein UgpC.